The sequence spans 430 residues: Xaa-Pro aminopeptidase (430 aa).

Mn(2+) contacts are provided by D254, D265, H348, E377, and E400.

The protein belongs to the peptidase M24B family. As to quaternary structure, homotetramer. Mn(2+) is required as a cofactor.

It catalyses the reaction Release of any N-terminal amino acid, including proline, that is linked to proline, even from a dipeptide or tripeptide.. The chain is Xaa-Pro aminopeptidase (pepP) from Haemophilus influenzae (strain ATCC 51907 / DSM 11121 / KW20 / Rd).